Reading from the N-terminus, the 359-residue chain is Phosphoserine aminotransferase (359 aa).

An L-glutamate-binding site is contributed by Arg-42. Pyridoxal 5'-phosphate is bound by residues 76-77 (AS), Trp-102, Thr-151, Asp-170, and Gln-193. Lys-194 carries the N6-(pyridoxal phosphate)lysine modification. 235-236 (NT) contributes to the pyridoxal 5'-phosphate binding site.

It belongs to the class-V pyridoxal-phosphate-dependent aminotransferase family. SerC subfamily. Homodimer. The cofactor is pyridoxal 5'-phosphate.

It is found in the cytoplasm. The catalysed reaction is O-phospho-L-serine + 2-oxoglutarate = 3-phosphooxypyruvate + L-glutamate. It catalyses the reaction 4-(phosphooxy)-L-threonine + 2-oxoglutarate = (R)-3-hydroxy-2-oxo-4-phosphooxybutanoate + L-glutamate. It functions in the pathway amino-acid biosynthesis; L-serine biosynthesis; L-serine from 3-phospho-D-glycerate: step 2/3. Its pathway is cofactor biosynthesis; pyridoxine 5'-phosphate biosynthesis; pyridoxine 5'-phosphate from D-erythrose 4-phosphate: step 3/5. Catalyzes the reversible conversion of 3-phosphohydroxypyruvate to phosphoserine and of 3-hydroxy-2-oxo-4-phosphonooxybutanoate to phosphohydroxythreonine. The sequence is that of Phosphoserine aminotransferase (serC) from Bacillus subtilis (strain 168).